Consider the following 207-residue polypeptide: Large ribosomal subunit protein uL4 (207 aa).

Positions 43 to 52 are enriched in polar residues; the sequence is NKRQGTQSAK. The tract at residues 43-72 is disordered; sequence NKRQGTQSAKTRAEVRGGGRKPWKQKGTGR. The segment covering 60–71 has biased composition (basic residues); the sequence is GGRKPWKQKGTG.

The protein belongs to the universal ribosomal protein uL4 family. In terms of assembly, part of the 50S ribosomal subunit.

In terms of biological role, one of the primary rRNA binding proteins, this protein initially binds near the 5'-end of the 23S rRNA. It is important during the early stages of 50S assembly. It makes multiple contacts with different domains of the 23S rRNA in the assembled 50S subunit and ribosome. Functionally, forms part of the polypeptide exit tunnel. The chain is Large ribosomal subunit protein uL4 from Alkaliphilus metalliredigens (strain QYMF).